Reading from the N-terminus, the 283-residue chain is MDLLGAHVSIAGGIHNAVDRGVSSGCDVIQIFTQNSNQWKGKAVSPADAQLFRDKLAASGLSHVMSHDIYLINLAAAPGEVKDKSLIAFKEEMQRCAALGIGKIVMHPGSHTGDGEDTGIRRICEAFDQLFGEVPQFTGKVLLENTAGQGTNLGYRFDHLKAIIEGSSYPTRFGVCFDTCHAFASGYPIADRDGYRRTFDEFDRALGIDKLMAFHLNDSKKGLGCKVDRHEHIGAGALGLEPFRFILNDPHFKLVPKFIETPKGDADEMDALNLKLLRSLIEG.

Positions 67, 107, 144, 178, 181, 215, 228, 230, and 260 each coordinate Zn(2+).

The protein belongs to the AP endonuclease 2 family. The cofactor is Zn(2+).

The catalysed reaction is Endonucleolytic cleavage to 5'-phosphooligonucleotide end-products.. Its function is as follows. Endonuclease IV plays a role in DNA repair. It cleaves phosphodiester bonds at apurinic or apyrimidinic (AP) sites, generating a 3'-hydroxyl group and a 5'-terminal sugar phosphate. In Geobacter sp. (strain M21), this protein is Probable endonuclease 4.